The sequence spans 839 residues: Amyloid-beta A4 precursor protein-binding family A member 1 (839 aa).

Disordered regions lie at residues 1 to 118 (MNHL…DESA), 235 to 346 (RLHH…EKRD), and 362 to 437 (VKTR…ESRK). Positions 23-38 (ESVEADLEHPEVEEEQ) are enriched in acidic residues. A Phosphoserine modification is found at S79. Basic and acidic residues-rich tracts occupy residues 103–112 (DGYEAERAQD) and 237–255 (HHYDERSDGESDSPEKEAE). The interval 227–315 (YRQEALGARL…TPGGGHPDSP (89 aa)) is munc-18-1 binding. Residues S243, S247, S249, S264, S281, and S286 each carry the phosphoserine modification. Residue T306 is modified to Phosphothreonine. A phosphoserine mark is found at S314 and S369. T372 is subject to Phosphothreonine. Positions 375–438 (EPKEPIWVMR…ASTNKESRKS (64 aa)) are LIN-2/CASK binding. Over residues 389–400 (PTRDCDDQRPVD) the composition is skewed to basic and acidic residues. A compositionally biased stretch (low complexity) spans 401–417 (GDSPSPGSSSPLGAESS). Phosphoserine is present on residues S403, S405, S410, and S570. Residues 459-645 (DGIIFAANYL…LLNTQDMYND (187 aa)) enclose the PID domain. Residues 628–643 (LSQKEYSDLLNTQDMY) are autoinhibitory helix linker. PDZ domains follow at residues 658–744 (DVFI…IVRC) and 749–824 (TVLI…TMPA).

Part of a multimeric complex containing STXBP1 and STX1A. Interacts with STXBP1. Component of the brain-specific heterotrimeric complex (LIN-10-LIN-2-LIN-7 complex) composed of at least APBA1, CASK, and LIN7, which associates with the motor protein KIF17 to transport vesicles along microtubules. Within the complex, interacts (via PDZ domain) with the motor protein KIF17; the interaction is direct and is required for association of KIF17 with the cargo that is to be transported. Binds to the cytoplasmic domain of amyloid protein (APP). Interacts (via PDZ 1 and 2 domains) with FSPB. Isoform 2 interacts (via its truncated PID domain) with active, GTP-bound RAB6A and RAB6B. Brain. Detected in the cerebellum, hippocampus, olfactory system, piriform and entorhinal cortex, supraoptic nucleus of the hypothalamus, substantia nigra, and other mesencephalic areas.

It localises to the cytoplasm. The protein localises to the perinuclear region. The protein resides in the nucleus. Its subcellular location is the golgi apparatus. Putative function in synaptic vesicle exocytosis by binding to Munc18-1, an essential component of the synaptic vesicle exocytotic machinery. May modulate processing of the amyloid-beta precursor protein (APP) and hence formation of APP-beta. The chain is Amyloid-beta A4 precursor protein-binding family A member 1 (Apba1) from Rattus norvegicus (Rat).